A 231-amino-acid chain; its full sequence is MIDYRGWRHTFKLDPDKTIDDEALEAICESGTDAIIVGGTYGVTYDNTLELMSRLRRYAVPAVLEISSLDAVVPGFDSYLIPLVLNAGDPDWIFAPHVSGLQAFGAYIHWDEIITEGYIIANPEAGVAQLTKARPIADATQAKAYAQVATNICRLPIVYMEYSGTYGDPTIVKAAKTGAGEAHLFYGGGIRNPEQAAEMAAIADTVVVGNVIYDDLDAALATVKAVKGTQY.

Lys-12 lines the sn-glycerol 1-phosphate pocket. 2 residues coordinate Mg(2+): Asp-14 and Thr-40. Residues 159–164 (YMEYSG), Gly-189, and 209–210 (GN) each bind sn-glycerol 1-phosphate.

Belongs to the GGGP/HepGP synthase family. Group I subfamily. Homodimer. Mg(2+) serves as cofactor.

It catalyses the reaction sn-glycerol 1-phosphate + all-trans-heptaprenyl diphosphate = 3-heptaprenyl-sn-glycero-1-phosphate + diphosphate. Its pathway is membrane lipid metabolism; glycerophospholipid metabolism. Functionally, prenyltransferase that catalyzes in vivo the transfer of the heptaprenyl moiety of heptaprenyl pyrophosphate (HepPP; 35 carbon atoms) to the C3 hydroxyl of sn-glycerol-1-phosphate (G1P), producing heptaprenylglyceryl phosphate (HepGP). This reaction is an ether-bond-formation step in the biosynthesis of archaea-type G1P-based membrane lipids found in Bacillales. The protein is Heptaprenylglyceryl phosphate synthase of Brevibacillus brevis (strain 47 / JCM 6285 / NBRC 100599).